Consider the following 246-residue polypeptide: Triosephosphate isomerase (246 aa).

Residue 9 to 11 participates in substrate binding; that stretch reads NWK. The active-site Electrophile is the H91. E161 acts as the Proton acceptor in catalysis. Residues G167, S206, and 227–228 contribute to the substrate site; that span reads GG.

It belongs to the triosephosphate isomerase family. Homodimer.

The protein localises to the cytoplasm. It carries out the reaction D-glyceraldehyde 3-phosphate = dihydroxyacetone phosphate. It participates in carbohydrate biosynthesis; gluconeogenesis. Its pathway is carbohydrate degradation; glycolysis; D-glyceraldehyde 3-phosphate from glycerone phosphate: step 1/1. Its function is as follows. Involved in the gluconeogenesis. Catalyzes stereospecifically the conversion of dihydroxyacetone phosphate (DHAP) to D-glyceraldehyde-3-phosphate (G3P). The chain is Triosephosphate isomerase from Ruegeria sp. (strain TM1040) (Silicibacter sp.).